The chain runs to 302 residues: 3-methyl-2-oxobutanoate hydroxymethyltransferase 1 (302 aa).

Asp-75 and Asp-118 together coordinate Mg(2+). Residues 75–76, Asp-118, and Lys-147 contribute to the 3-methyl-2-oxobutanoate site; that span reads DS. Glu-149 contacts Mg(2+). Residue Glu-217 is the Proton acceptor of the active site.

The protein belongs to the PanB family. As to quaternary structure, homodecamer; pentamer of dimers. The cofactor is Mg(2+).

It is found in the cytoplasm. It catalyses the reaction 3-methyl-2-oxobutanoate + (6R)-5,10-methylene-5,6,7,8-tetrahydrofolate + H2O = 2-dehydropantoate + (6S)-5,6,7,8-tetrahydrofolate. The protein operates within cofactor biosynthesis; (R)-pantothenate biosynthesis; (R)-pantoate from 3-methyl-2-oxobutanoate: step 1/2. Functionally, catalyzes the reversible reaction in which hydroxymethyl group from 5,10-methylenetetrahydrofolate is transferred onto alpha-ketoisovalerate to form ketopantoate. The polypeptide is 3-methyl-2-oxobutanoate hydroxymethyltransferase 1 (Zymomonas mobilis subsp. mobilis (strain ATCC 31821 / ZM4 / CP4)).